We begin with the raw amino-acid sequence, 176 residues long: ATP-dependent protease subunit HslV (176 aa).

T6 is a catalytic residue. S161, C164, and T167 together coordinate Na(+).

This sequence belongs to the peptidase T1B family. HslV subfamily. In terms of assembly, a double ring-shaped homohexamer of HslV is capped on each side by a ring-shaped HslU homohexamer. The assembly of the HslU/HslV complex is dependent on binding of ATP.

The protein resides in the cytoplasm. The catalysed reaction is ATP-dependent cleavage of peptide bonds with broad specificity.. With respect to regulation, allosterically activated by HslU binding. In terms of biological role, protease subunit of a proteasome-like degradation complex believed to be a general protein degrading machinery. The chain is ATP-dependent protease subunit HslV from Pseudothermotoga lettingae (strain ATCC BAA-301 / DSM 14385 / NBRC 107922 / TMO) (Thermotoga lettingae).